A 459-amino-acid polypeptide reads, in one-letter code: Glycosyl hydrolase family 109 protein (459 aa).

The segment at residues 1–31 (MHNIHRRHFLKAAGAVTAGLITANITASTHA) is a signal peptide (tat-type signal). NAD(+)-binding positions include 64 to 65 (ER), Asp-86, 135 to 138 (WEWH), 155 to 156 (EV), and Asn-184. Residues Tyr-213, Arg-232, 244-247 (YPTH), and Tyr-326 contribute to the substrate site. Tyr-244 lines the NAD(+) pocket.

The protein belongs to the Gfo/Idh/MocA family. Glycosyl hydrolase 109 subfamily. NAD(+) is required as a cofactor. Predicted to be exported by the Tat system. The position of the signal peptide cleavage has not been experimentally proven.

Its function is as follows. Glycosidase. This chain is Glycosyl hydrolase family 109 protein, found in Shewanella putrefaciens (strain CN-32 / ATCC BAA-453).